We begin with the raw amino-acid sequence, 497 residues long: Carboxypeptidase Y homolog ARB_02032 (497 aa).

A signal peptide spans 1–18 (MRFTQIVAAALCLGATEA). Asn-88 carries an N-linked (GlcNAc...) asparagine glycan. Ser-204 is a catalytic residue. N-linked (GlcNAc...) asparagine glycans are attached at residues Asn-263 and Asn-393. Residue Asp-403 is part of the active site. Asn-417 carries N-linked (GlcNAc...) asparagine glycosylation. His-469 is an active-site residue.

This sequence belongs to the peptidase S10 family.

It localises to the secreted. It carries out the reaction Release of a C-terminal amino acid with broad specificity.. Functionally, involved in degradation of small peptides. This chain is Carboxypeptidase Y homolog ARB_02032, found in Arthroderma benhamiae (strain ATCC MYA-4681 / CBS 112371) (Trichophyton mentagrophytes).